The chain runs to 381 residues: uncharacterized protein (381 aa).

The protein belongs to the glycerate kinase type-1 family.

This is an uncharacterized protein from Mycobacterium tuberculosis (strain CDC 1551 / Oshkosh).